A 260-amino-acid chain; its full sequence is Type II methyltransferase M.CviBI (260 aa).

S-adenosyl-L-methionine is bound by residues W7, K11, D54, and D177.

This sequence belongs to the N(4)/N(6)-methyltransferase family.

It carries out the reaction a 2'-deoxyadenosine in DNA + S-adenosyl-L-methionine = an N(6)-methyl-2'-deoxyadenosine in DNA + S-adenosyl-L-homocysteine + H(+). An alpha subtype methylase, recognizes the double-stranded sequence 5'-GANTC-3', methylates A-2 on both strands, and protects the DNA from cleavage by the CviBI endonuclease. This chain is Type II methyltransferase M.CviBI, found in Paramecium bursaria Chlorella virus NC1A (PBCV-NC1A).